The following is a 182-amino-acid chain: ATP synthase subunit delta (182 aa).

Belongs to the ATPase delta chain family. In terms of assembly, F-type ATPases have 2 components, F(1) - the catalytic core - and F(0) - the membrane proton channel. F(1) has five subunits: alpha(3), beta(3), gamma(1), delta(1), epsilon(1). F(0) has three main subunits: a(1), b(2) and c(10-14). The alpha and beta chains form an alternating ring which encloses part of the gamma chain. F(1) is attached to F(0) by a central stalk formed by the gamma and epsilon chains, while a peripheral stalk is formed by the delta and b chains.

The protein resides in the cell inner membrane. Its function is as follows. F(1)F(0) ATP synthase produces ATP from ADP in the presence of a proton or sodium gradient. F-type ATPases consist of two structural domains, F(1) containing the extramembraneous catalytic core and F(0) containing the membrane proton channel, linked together by a central stalk and a peripheral stalk. During catalysis, ATP synthesis in the catalytic domain of F(1) is coupled via a rotary mechanism of the central stalk subunits to proton translocation. In terms of biological role, this protein is part of the stalk that links CF(0) to CF(1). It either transmits conformational changes from CF(0) to CF(1) or is implicated in proton conduction. This chain is ATP synthase subunit delta, found in Bdellovibrio bacteriovorus (strain ATCC 15356 / DSM 50701 / NCIMB 9529 / HD100).